Here is a 344-residue protein sequence, read N- to C-terminus: Lipase chaperone (344 aa).

The helical transmembrane segment at 14–34 (AVVYGVVGLAAIAGVAMWSGA) threads the bilayer.

This sequence belongs to the lipase chaperone family.

It localises to the cell inner membrane. Its function is as follows. May be involved in the folding of the extracellular lipase during its passage through the periplasm. The protein is Lipase chaperone (lifO) of Burkholderia cepacia (Pseudomonas cepacia).